A 933-amino-acid chain; its full sequence is Bifunctional uridylyltransferase/uridylyl-removing enzyme (933 aa).

A uridylyltransferase region spans residues 1–379 (MAKISLKLDE…TFQRRKRKLA (379 aa)). Residues 380-736 (GTSDFIVDNH…VKTHQFEAVT (357 aa)) form a uridylyl-removing region. The region spanning 496 to 619 (VDEHLIRCIG…VQSVERLKLL (124 aa)) is the HD domain. 2 consecutive ACT domains span residues 737-818 (EITV…EMIE) and 848-922 (VIEV…GIAP).

It belongs to the GlnD family. The cofactor is Mg(2+).

It carries out the reaction [protein-PII]-L-tyrosine + UTP = [protein-PII]-uridylyl-L-tyrosine + diphosphate. The catalysed reaction is [protein-PII]-uridylyl-L-tyrosine + H2O = [protein-PII]-L-tyrosine + UMP + H(+). Uridylyltransferase (UTase) activity is inhibited by glutamine, while glutamine activates uridylyl-removing (UR) activity. Its function is as follows. Modifies, by uridylylation and deuridylylation, the PII regulatory proteins (GlnB and homologs), in response to the nitrogen status of the cell that GlnD senses through the glutamine level. Under low glutamine levels, catalyzes the conversion of the PII proteins and UTP to PII-UMP and PPi, while under higher glutamine levels, GlnD hydrolyzes PII-UMP to PII and UMP (deuridylylation). Thus, controls uridylylation state and activity of the PII proteins, and plays an important role in the regulation of nitrogen fixation and metabolism. The chain is Bifunctional uridylyltransferase/uridylyl-removing enzyme from Mesorhizobium japonicum (strain LMG 29417 / CECT 9101 / MAFF 303099) (Mesorhizobium loti (strain MAFF 303099)).